Consider the following 423-residue polypeptide: Ornithine cyclodeaminase (423 aa).

The NAD(+) site is built by asparagine 241, alanine 242, aspartate 320, threonine 352, methionine 353, leucine 354, histidine 355, aspartate 373, aspartate 396, and valine 397.

It belongs to the AgrE/ArgZ ornithine cyclodeaminase family. NAD(+) serves as cofactor.

The enzyme catalyses L-ornithine = L-proline + NH4(+). In terms of biological role, catalyzes the conversion of ornithine to proline, with the release of ammonia. The polypeptide is Ornithine cyclodeaminase (Methanocaldococcus jannaschii (strain ATCC 43067 / DSM 2661 / JAL-1 / JCM 10045 / NBRC 100440) (Methanococcus jannaschii)).